The chain runs to 580 residues: 2-succinyl-5-enolpyruvyl-6-hydroxy-3-cyclohexene-1-carboxylate synthase (580 aa).

The protein belongs to the TPP enzyme family. MenD subfamily. In terms of assembly, homodimer. Mg(2+) serves as cofactor. Mn(2+) is required as a cofactor. The cofactor is thiamine diphosphate.

The catalysed reaction is isochorismate + 2-oxoglutarate + H(+) = 5-enolpyruvoyl-6-hydroxy-2-succinyl-cyclohex-3-ene-1-carboxylate + CO2. The protein operates within quinol/quinone metabolism; 1,4-dihydroxy-2-naphthoate biosynthesis; 1,4-dihydroxy-2-naphthoate from chorismate: step 2/7. Its pathway is quinol/quinone metabolism; menaquinone biosynthesis. Its function is as follows. Catalyzes the thiamine diphosphate-dependent decarboxylation of 2-oxoglutarate and the subsequent addition of the resulting succinic semialdehyde-thiamine pyrophosphate anion to isochorismate to yield 2-succinyl-5-enolpyruvyl-6-hydroxy-3-cyclohexene-1-carboxylate (SEPHCHC). The polypeptide is 2-succinyl-5-enolpyruvyl-6-hydroxy-3-cyclohexene-1-carboxylate synthase (Bacillus pumilus (strain SAFR-032)).